We begin with the raw amino-acid sequence, 349 residues long: Isopentenyl-diphosphate delta-isomerase (349 aa).

7–8 contributes to the substrate binding site; the sequence is RK. FMN contacts are provided by residues Ser65, 66-68, Ser96, and Asn124; that span reads SMT. 96–98 is a binding site for substrate; it reads SQR. Gln159 is a substrate binding site. Glu160 is a binding site for Mg(2+). FMN is bound by residues Lys191, Thr221, 271 to 273, and 292 to 293; these read GIR and AA.

Belongs to the IPP isomerase type 2 family. In terms of assembly, homooctamer. Dimer of tetramers. The cofactor is FMN. NADPH is required as a cofactor. Mg(2+) serves as cofactor.

The protein resides in the cytoplasm. It catalyses the reaction isopentenyl diphosphate = dimethylallyl diphosphate. In terms of biological role, involved in the biosynthesis of isoprenoids. Catalyzes the 1,3-allylic rearrangement of the homoallylic substrate isopentenyl (IPP) to its allylic isomer, dimethylallyl diphosphate (DMAPP). This is Isopentenyl-diphosphate delta-isomerase from Synechocystis sp. (strain ATCC 27184 / PCC 6803 / Kazusa).